Consider the following 82-residue polypeptide: Delta-conotoxin-like CnVIA (82 aa).

The N-terminal stretch at 1 to 22 (MKLTCMMIVAVLFLTAWTFVTA) is a signal peptide. Residues 23-49 (DDSRNGLENLSPKARHEMKNPEASKSN) constitute a propeptide that is removed on maturation. 3 cysteine pairs are disulfide-bonded: cysteine 54–cysteine 69, cysteine 61–cysteine 73, and cysteine 68–cysteine 78.

The protein belongs to the conotoxin O1 superfamily. In terms of tissue distribution, expressed by the venom duct.

The protein localises to the secreted. Functionally, delta-conotoxins bind to site 6 of voltage-gated sodium channels (Nav) and inhibit the inactivation process. In Conus consors (Singed cone), this protein is Delta-conotoxin-like CnVIA.